Consider the following 138-residue polypeptide: Putative pre-16S rRNA nuclease (138 aa).

The protein belongs to the YqgF nuclease family.

It localises to the cytoplasm. Could be a nuclease involved in processing of the 5'-end of pre-16S rRNA. In Salmonella dublin (strain CT_02021853), this protein is Putative pre-16S rRNA nuclease.